We begin with the raw amino-acid sequence, 1208 residues long: DNA-directed RNA polymerase subunit beta (1208 aa).

The protein belongs to the RNA polymerase beta chain family. The RNAP catalytic core consists of 2 alpha, 1 beta, 1 beta' and 1 omega subunit. When a sigma factor is associated with the core the holoenzyme is formed, which can initiate transcription.

The catalysed reaction is RNA(n) + a ribonucleoside 5'-triphosphate = RNA(n+1) + diphosphate. In terms of biological role, DNA-dependent RNA polymerase catalyzes the transcription of DNA into RNA using the four ribonucleoside triphosphates as substrates. This Enterococcus faecium (Streptococcus faecium) protein is DNA-directed RNA polymerase subunit beta.